Consider the following 426-residue polypeptide: Glutamyl-tRNA(Gln) amidotransferase subunit D (426 aa).

The Asparaginase/glutaminase domain occupies 82–413; the sequence is KNISILSTGG…KDAKKLICKN (332 aa). Active-site residues include Thr-92, Thr-168, Asp-169, and Lys-245.

This sequence belongs to the asparaginase 1 family. GatD subfamily. As to quaternary structure, heterodimer of GatD and GatE.

The catalysed reaction is L-glutamyl-tRNA(Gln) + L-glutamine + ATP + H2O = L-glutaminyl-tRNA(Gln) + L-glutamate + ADP + phosphate + H(+). In terms of biological role, allows the formation of correctly charged Gln-tRNA(Gln) through the transamidation of misacylated Glu-tRNA(Gln) in organisms which lack glutaminyl-tRNA synthetase. The reaction takes place in the presence of glutamine and ATP through an activated gamma-phospho-Glu-tRNA(Gln). The GatDE system is specific for glutamate and does not act on aspartate. The protein is Glutamyl-tRNA(Gln) amidotransferase subunit D of Methanococcus vannielii (strain ATCC 35089 / DSM 1224 / JCM 13029 / OCM 148 / SB).